Reading from the N-terminus, the 263-residue chain is E3 ubiquitin-protein ligase SINA-like 8 (263 aa).

An RING-type; degenerate zinc finger spans residues 35–71; sequence CPICCEGLTCPIFQCENGHLACSSCCPKLRNKCPACP. The segment at 75–261 is SBD; sequence ILESILVTCP…IKLSIVETSN (187 aa). The SIAH-type zinc finger occupies 78–136; that stretch reads SILVTCPNDMFGCTESFLYGKKSTHEEECIFSLCSCPSLDCEYSGRYEDLYDHYKLTHI. The Zn(2+) site is built by Cys83, Cys90, His102, Cys106, Cys113, Cys118, His130, and His135.

Belongs to the SINA (Seven in absentia) family.

It carries out the reaction S-ubiquitinyl-[E2 ubiquitin-conjugating enzyme]-L-cysteine + [acceptor protein]-L-lysine = [E2 ubiquitin-conjugating enzyme]-L-cysteine + N(6)-ubiquitinyl-[acceptor protein]-L-lysine.. Its pathway is protein modification; protein ubiquitination. Functionally, E3 ubiquitin-protein ligase that mediates ubiquitination and subsequent proteasomal degradation of target proteins. E3 ubiquitin ligases accept ubiquitin from an E2 ubiquitin-conjugating enzyme in the form of a thioester and then directly transfers the ubiquitin to targeted substrates. It probably triggers the ubiquitin-mediated degradation of different substrates. The chain is E3 ubiquitin-protein ligase SINA-like 8 from Arabidopsis thaliana (Mouse-ear cress).